We begin with the raw amino-acid sequence, 80 residues long: uncharacterized protein (80 aa).

Residues 57–80 (GNIDSDVSDQDQIGNPSAPISNQI) form a disordered region.

This is an uncharacterized protein from Bacillus subtilis (strain 168).